Reading from the N-terminus, the 858-residue chain is Elongation factor 2 (858 aa).

A tr-type G domain is found at 17–362 (ANIRNMSVIA…MITIHLPSPV (346 aa)). GTP-binding positions include 26 to 33 (AHVDHGKS), 158 to 161 (NKMD), and 216 to 218 (SGL). Histidine 715 is modified (diphthamide).

This sequence belongs to the TRAFAC class translation factor GTPase superfamily. Classic translation factor GTPase family. EF-G/EF-2 subfamily. As to quaternary structure, binds to 80S ribosomes. Actively translating ribosomes show mutually exclusive binding of eIF5a (EIF5A or EIF5A2) and EEF2/eEF2. Interacts with serbp1; interaction sequesters eef2/eEF2 at the A-site of the ribosome, thereby blocking the interaction sites of the mRNA-tRNA complex, promoting ribosome stabilization and hibernation. Interacts with habp4; interaction takes place at the A-site of hibernating ribosomes and promotes ribosome stabilization.

It is found in the cytoplasm. The protein resides in the nucleus. It carries out the reaction GTP + H2O = GDP + phosphate + H(+). Its function is as follows. Catalyzes the GTP-dependent ribosomal translocation step during translation elongation. During this step, the ribosome changes from the pre-translocational (PRE) to the post-translocational (POST) state as the newly formed A-site-bound peptidyl-tRNA and P-site-bound deacylated tRNA move to the P and E sites, respectively. Catalyzes the coordinated movement of the two tRNA molecules, the mRNA and conformational changes in the ribosome. This chain is Elongation factor 2, found in Xenopus laevis (African clawed frog).